A 652-amino-acid polypeptide reads, in one-letter code: Starch synthase 1, chloroplastic/amyloplastic (652 aa).

The N-terminal 49 residues, Met1 to Arg49, are a transit peptide targeting the chloroplast. Lys156 contributes to the ADP-alpha-D-glucose binding site.

The protein belongs to the glycosyltransferase 1 family. Bacterial/plant glycogen synthase subfamily. Expressed in roots, leaves, stems, buds and flowers.

It is found in the plastid. It localises to the chloroplast. The protein resides in the amyloplast. It carries out the reaction [(1-&gt;4)-alpha-D-glucosyl](n) + ADP-alpha-D-glucose = [(1-&gt;4)-alpha-D-glucosyl](n+1) + ADP + H(+). The protein operates within glycan biosynthesis; starch biosynthesis. Its function is as follows. Involved in the synthesis of short glycan chains within amylopectin in leaves. Is required to generate chains up to about a degree of polymerization of 10 (DP10). The polypeptide is Starch synthase 1, chloroplastic/amyloplastic (SS1) (Arabidopsis thaliana (Mouse-ear cress)).